Consider the following 90-residue polypeptide: Large ribosomal subunit protein bL31B-1 (90 aa).

The protein belongs to the bacterial ribosomal protein bL31 family. Type B subfamily. Part of the 50S ribosomal subunit.

The sequence is that of Large ribosomal subunit protein bL31B-1 from Streptomyces coelicolor (strain ATCC BAA-471 / A3(2) / M145).